The sequence spans 68 residues: Putative transcript Y 10 protein (68 aa).

The chain is Putative transcript Y 10 protein (TTTY10) from Homo sapiens (Human).